A 379-amino-acid polypeptide reads, in one-letter code: Transcription termination factor Rho (379 aa).

The 68-residue stretch at 1–68 folds into the Rho RNA-BD domain; sequence MTDKYGFLRS…KRIFQINGRF (68 aa). ATP is bound by residues 111–116, 123–128, and Arg154; these read GKGQRG and KTGKTT.

It belongs to the Rho family. As to quaternary structure, homohexamer. The homohexamer assembles into an open ring structure.

Its function is as follows. Facilitates transcription termination by a mechanism that involves Rho binding to the nascent RNA, activation of Rho's RNA-dependent ATPase activity, and release of the mRNA from the DNA template. The chain is Transcription termination factor Rho from Karelsulcia muelleri (strain SMDSEM) (Sulcia muelleri).